We begin with the raw amino-acid sequence, 624 residues long: tRNA uridine 5-carboxymethylaminomethyl modification enzyme MnmG (624 aa).

FAD-binding positions include 13 to 18 (GGGHAG), Val-125, and Ser-180. An NAD(+)-binding site is contributed by 273–287 (GPRYCPSIEDKIVRF). An FAD-binding site is contributed by Gln-370.

It belongs to the MnmG family. In terms of assembly, homodimer. Heterotetramer of two MnmE and two MnmG subunits. The cofactor is FAD.

It is found in the cytoplasm. NAD-binding protein involved in the addition of a carboxymethylaminomethyl (cmnm) group at the wobble position (U34) of certain tRNAs, forming tRNA-cmnm(5)s(2)U34. This Legionella pneumophila (strain Paris) protein is tRNA uridine 5-carboxymethylaminomethyl modification enzyme MnmG.